We begin with the raw amino-acid sequence, 359 residues long: Peptide chain release factor 1 (359 aa).

Glutamine 236 is subject to N5-methylglutamine.

Belongs to the prokaryotic/mitochondrial release factor family. Methylated by PrmC. Methylation increases the termination efficiency of RF1.

The protein localises to the cytoplasm. In terms of biological role, peptide chain release factor 1 directs the termination of translation in response to the peptide chain termination codons UAG and UAA. The chain is Peptide chain release factor 1 from Streptococcus agalactiae.